Consider the following 424-residue polypeptide: Serine--tRNA ligase 1 (424 aa).

232-234 (TAE) provides a ligand contact to L-serine. 263–265 (RSE) contacts ATP. Glu-286 is an L-serine binding site. 350 to 353 (EISS) lines the ATP pocket. Position 386 (Ser-386) interacts with L-serine.

This sequence belongs to the class-II aminoacyl-tRNA synthetase family. Type-1 seryl-tRNA synthetase subfamily. Homodimer. The tRNA molecule binds across the dimer.

The protein localises to the cytoplasm. The enzyme catalyses tRNA(Ser) + L-serine + ATP = L-seryl-tRNA(Ser) + AMP + diphosphate + H(+). It catalyses the reaction tRNA(Sec) + L-serine + ATP = L-seryl-tRNA(Sec) + AMP + diphosphate + H(+). It participates in aminoacyl-tRNA biosynthesis; selenocysteinyl-tRNA(Sec) biosynthesis; L-seryl-tRNA(Sec) from L-serine and tRNA(Sec): step 1/1. In terms of biological role, catalyzes the attachment of serine to tRNA(Ser). Is also able to aminoacylate tRNA(Sec) with serine, to form the misacylated tRNA L-seryl-tRNA(Sec), which will be further converted into selenocysteinyl-tRNA(Sec). The polypeptide is Serine--tRNA ligase 1 (Clostridium acetobutylicum (strain ATCC 824 / DSM 792 / JCM 1419 / IAM 19013 / LMG 5710 / NBRC 13948 / NRRL B-527 / VKM B-1787 / 2291 / W)).